A 650-amino-acid polypeptide reads, in one-letter code: Putative polypeptide N-acetylgalactosaminyltransferase 9 (650 aa).

The Cytoplasmic portion of the chain corresponds to 1–11 (MAFIWRRRSTT). The chain crosses the membrane as a helical; Signal-anchor for type II membrane protein span at residues 12–31 (IVKLVAFALAIWFCIAFLVY). Residues 32 to 650 (TDDTRRRAAQ…TLENYDSSKL (619 aa)) lie on the Lumenal side of the membrane. Residues 84–154 (NVIGGGGQKQ…NPGELGKPVR (71 aa)) form a disordered region. Basic and acidic residues predominate over residues 107–136 (HKADLQAERMRKKAAEQPKKKPQEDSKKVI). Cystine bridges form between Cys-198–Cys-432, Cys-423–Cys-499, Cys-535–Cys-554, Cys-577–Cys-590, and Cys-616–Cys-631. The tract at residues 208–317 (LPKTDVIICF…EGWLEPLLDR (110 aa)) is catalytic subdomain A. Substrate contacts are provided by Cys-216, Asp-249, and Arg-278. Asp-301 lines the Mn(2+) pocket. Substrate-binding residues include Ser-302 and His-303. His-303 provides a ligand contact to Mn(2+). N-linked (GlcNAc...) asparagine glycans are attached at residues Asn-321 and Asn-373. The segment at 378–440 (PVYSPTMAGG…PCSHVGHIFR (63 aa)) is catalytic subdomain B. Mn(2+) is bound at residue His-437. Substrate is bound by residues Arg-440 and Tyr-445. In terms of domain architecture, Ricin B-type lectin spans 521–643 (AHGEIRNLGY…SLSRQQWTLE (123 aa)).

The protein belongs to the glycosyltransferase 2 family. GalNAc-T subfamily. In terms of assembly, isoform A forms homotetramer. Isoform B forms homodimer. Mn(2+) serves as cofactor.

The protein resides in the golgi apparatus membrane. It catalyses the reaction L-seryl-[protein] + UDP-N-acetyl-alpha-D-galactosamine = a 3-O-[N-acetyl-alpha-D-galactosaminyl]-L-seryl-[protein] + UDP + H(+). The catalysed reaction is L-threonyl-[protein] + UDP-N-acetyl-alpha-D-galactosamine = a 3-O-[N-acetyl-alpha-D-galactosaminyl]-L-threonyl-[protein] + UDP + H(+). It participates in protein modification; protein glycosylation. Functionally, catalyzes the initial reaction in O-linked oligosaccharide biosynthesis, the transfer of an N-acetyl-D-galactosamine residue to a serine or threonine residue on the protein receptor. It can both act as a peptide transferase that transfers GalNAc onto unmodified peptide substrates, and as a glycopeptide transferase that requires the prior addition of a GalNAc on a peptide before adding additional GalNAc moieties. Its function is as follows. N-acetylgalactosaminyltransferase which preferentially O-glycosylates negatively charge substrates. O-glycosylates mucin-like protein Sgs3 in the salivary gland but to a lesser extent than isoform B. By regulating the O-glycosylation of secretory cargo proteins plays a role in the morphology and maturation of salivary gland secretory granules. In terms of biological role, N-acetylgalactosaminyltransferase which preferentially O-glycosylates positively charge substrates. O-glycosylates mucin-like protein Sgs3 in the salivary gland. By regulating the O-glycosylation of secretory cargo proteins, plays a role in the morphology and maturation of salivary gland secretory granules. The chain is Putative polypeptide N-acetylgalactosaminyltransferase 9 from Drosophila melanogaster (Fruit fly).